The primary structure comprises 344 residues: Acireductone dioxygenase (344 aa).

Positions 92, 94, 98, and 137 each coordinate Fe(2+). Positions 92, 94, 98, and 137 each coordinate Ni(2+).

This sequence belongs to the acireductone dioxygenase (ARD) family. Fe(2+) serves as cofactor. The cofactor is Ni(2+).

It localises to the cytoplasm. The protein localises to the nucleus. The enzyme catalyses 1,2-dihydroxy-5-(methylsulfanyl)pent-1-en-3-one + O2 = 4-methylsulfanyl-2-oxobutanoate + formate + 2 H(+). The catalysed reaction is 1,2-dihydroxy-5-(methylsulfanyl)pent-1-en-3-one + O2 = 3-(methylsulfanyl)propanoate + CO + formate + 2 H(+). Its pathway is amino-acid biosynthesis; L-methionine biosynthesis via salvage pathway; L-methionine from S-methyl-5-thio-alpha-D-ribose 1-phosphate: step 5/6. Its function is as follows. Catalyzes 2 different reactions between oxygen and the acireductone 1,2-dihydroxy-3-keto-5-methylthiopentene (DHK-MTPene) depending upon the metal bound in the active site. Fe-containing acireductone dioxygenase (Fe-ARD) produces formate and 2-keto-4-methylthiobutyrate (KMTB), the alpha-ketoacid precursor of methionine in the methionine recycle pathway. Ni-containing acireductone dioxygenase (Ni-ARD) produces methylthiopropionate, carbon monoxide and formate, and does not lie on the methionine recycle pathway. The chain is Acireductone dioxygenase from Leishmania infantum.